A 67-amino-acid polypeptide reads, in one-letter code: uncharacterized protein (67 aa).

This is an uncharacterized protein from Measles virus (strain Halle) (MeV).